The following is a 245-amino-acid chain: MIKLVLIRHGQSLWNLENRFTGWTDVDLSENGLSEAREAGAILKKNGYTFDVAYTSVLKRAIRTLWIVLHEMDLAWVPVHKCWKLNERHYGALQGLNKDETAKKYGEEQVHIWRRSIDVRPPALTEDDPRYEMNDLRYKALKKGEFPLTECLVDTEKRVLDYWHSEIAPKLKNGNKVIISSHGNTIRSLVKYLDNLSSDGVVSLNIPTSIPLVYELDENLRPIRHYYLSMDGEVPEGEIPKHITF.

Substrate is bound by residues 8 to 15 (RHGQSLWN), 21 to 22 (TG), Arg60, 87 to 90 (ERHY), Lys98, 114 to 115 (RR), and 183 to 184 (GN). His9 functions as the Tele-phosphohistidine intermediate in the catalytic mechanism. Glu87 serves as the catalytic Proton donor/acceptor.

Belongs to the phosphoglycerate mutase family. BPG-dependent PGAM subfamily.

It carries out the reaction (2R)-2-phosphoglycerate = (2R)-3-phosphoglycerate. Its pathway is carbohydrate degradation; glycolysis; pyruvate from D-glyceraldehyde 3-phosphate: step 3/5. Its function is as follows. Catalyzes the interconversion of 2-phosphoglycerate and 3-phosphoglycerate. The sequence is that of 2,3-bisphosphoglycerate-dependent phosphoglycerate mutase from Bacillus anthracis (strain A0248).